Reading from the N-terminus, the 417-residue chain is Serine hydroxymethyltransferase (417 aa).

Residues Leu121 and 125-127 each bind (6S)-5,6,7,8-tetrahydrofolate; that span reads GHL. N6-(pyridoxal phosphate)lysine is present on Lys229. (6S)-5,6,7,8-tetrahydrofolate is bound at residue 355-357; that stretch reads SPF.

It belongs to the SHMT family. Homodimer. The cofactor is pyridoxal 5'-phosphate.

It localises to the cytoplasm. The catalysed reaction is (6R)-5,10-methylene-5,6,7,8-tetrahydrofolate + glycine + H2O = (6S)-5,6,7,8-tetrahydrofolate + L-serine. The protein operates within one-carbon metabolism; tetrahydrofolate interconversion. It participates in amino-acid biosynthesis; glycine biosynthesis; glycine from L-serine: step 1/1. Catalyzes the reversible interconversion of serine and glycine with tetrahydrofolate (THF) serving as the one-carbon carrier. This reaction serves as the major source of one-carbon groups required for the biosynthesis of purines, thymidylate, methionine, and other important biomolecules. Also exhibits THF-independent aldolase activity toward beta-hydroxyamino acids, producing glycine and aldehydes, via a retro-aldol mechanism. The sequence is that of Serine hydroxymethyltransferase from Xylella fastidiosa (strain 9a5c).